Consider the following 323-residue polypeptide: Mortality factor 4-like protein 1 (323 aa).

The 51-residue stretch at 12–62 (QEGERVLCFHGPLLYEAKCVKVAIKDKQVKYFIHHSGWNKNWDEWVPESRV) folds into the Tudor-knot domain. The tract at residues 76–143 (LQKANQEQYA…RKKRARVDPT (68 aa)) is disordered. The sufficient for interaction with SIN3A stretch occupies residues 94–227 (PGKKTSGLQQ…VAGIKEYFNV (134 aa)). A Nuclear localization signal motif is present at residues 96 to 107 (KKTSGLQQKNVD). Lys-104 is modified (N6-acetyllysine). Residues 125–191 (STSETPQPPR…FYLPAKKNVD (67 aa)) are interaction with RB1-1. The sufficient for interaction with PHF12 stretch occupies residues 149-303 (TFMNRVEVKV…FLKYLAKNSA (155 aa)). The MRG domain maps to 152–323 (NRVEVKVKIP…APPEYHRKAV (172 aa)). An interaction with RB1-2 region spans residues 284-305 (LALLLNYLHDFLKYLAKNSATL).

As to quaternary structure, component of the NuA4 histone acetyltransferase complex which contains the catalytic subunit KAT5/TIP60 and the subunits EP400, TRRAP/PAF400, BRD8/SMAP, EPC1, DMAP1/DNMAP1, RUVBL1/TIP49, RUVBL2, ING3, actin, ACTL6A/BAF53A, MORF4L1/MRG15, MORF4L2/MRGX, MRGBP, YEATS4/GAS41, VPS72/YL1 and MEAF6. The NuA4 complex interacts with MYC and the adenovirus E1A protein. MORF4L1 may also participate in the formation of NuA4 related complexes which lack the KAT5/TIP60 catalytic subunit, but which include the SWI/SNF related protein SRCAP. Component of the mSin3A histone deacetylase complex, which includes SIN3A, HDAC2, ARID4B, MORF4L1, RBBP4/RbAp48, and RBBP7/RbAp46. May also interact with PHF12 and one or more as yet undefined members of the TLE (transducin-like enhancer of split) family of transcriptional repressors. Component of the SIN3B complex, which includes SIN3B, HDAC2 or HDAC1, PHF12 and MORF4L1. Interacts with RB1 and KAT8. Interacts with the N-terminus of MRFAP1. Found in a complex composed of MORF4L1, MRFAP1 and RB1. Interacts with the entire BRCA complex, which contains BRCA1, PALB2, BRCA2 and RAD51. Interacts with PALB2. Forms a complex with MSL1 and NUPR1.

It localises to the nucleus. Component of the NuA4 histone acetyltransferase (HAT) complex which is involved in transcriptional activation of select genes principally by acetylation of nucleosomal histones H4 and H2A. This modification may both alter nucleosome - DNA interactions and promote interaction of the modified histones with other proteins which positively regulate transcription. This complex may be required for the activation of transcriptional programs associated with oncogene and proto-oncogene mediated growth induction, tumor suppressor mediated growth arrest and replicative senescence, apoptosis, and DNA repair. The NuA4 complex ATPase and helicase activities seem to be, at least in part, contributed by the association of RUVBL1 and RUVBL2 with EP400. NuA4 may also play a direct role in DNA repair when directly recruited to sites of DNA damage. As part of the SIN3B complex represses transcription and counteracts the histone acetyltransferase activity of EP300 through the recognition H3K27ac marks by PHF12 and the activity of the histone deacetylase HDAC2. SIN3B complex is recruited downstream of the constitutively active genes transcriptional start sites through interaction with histones and mitigates histone acetylation and RNA polymerase II progression within transcribed regions contributing to the regulation of transcription. Required for homologous recombination repair (HRR) and resistance to mitomycin C (MMC). Involved in the localization of PALB2, BRCA2 and RAD51, but not BRCA1, to DNA-damage foci. The protein is Mortality factor 4-like protein 1 (MORF4L1) of Pongo abelii (Sumatran orangutan).